Here is a 103-residue protein sequence, read N- to C-terminus: Floral defensin-like protein 1 (103 aa).

The signal sequence occupies residues 1–25 (MARSICFFAVAILALMLFAAYDAEA). Intrachain disulfides connect Cys-28–Cys-72, Cys-32–Cys-48, Cys-39–Cys-59, Cys-45–Cys-66, and Cys-49–Cys-68. The propeptide at 73–103 (VFEKTEATQTETFTKDVNTLAEALLEADMMV) is removed in mature form.

This sequence belongs to the DEFL family. When compared to other plant defensins, the petunia defensins have an additional fifth disulfide bond. Petals.

The protein localises to the secreted. The protein resides in the vacuole. Functionally, plant defense peptide with antifungal activity against F.oxysporum and B.cinerea. This is Floral defensin-like protein 1 (D1) from Petunia hybrida (Petunia).